The following is a 354-amino-acid chain: Methionine import ATP-binding protein MetN 2 (354 aa).

Positions isoleucine 6–isoleucine 250 constitute an ABC transporter domain. An ATP-binding site is contributed by glycine 42–serine 49.

Belongs to the ABC transporter superfamily. Methionine importer (TC 3.A.1.24) family. The complex is composed of two ATP-binding proteins (MetN), two transmembrane proteins (MetI) and a solute-binding protein (MetQ).

Its subcellular location is the cell membrane. It catalyses the reaction L-methionine(out) + ATP + H2O = L-methionine(in) + ADP + phosphate + H(+). The enzyme catalyses D-methionine(out) + ATP + H2O = D-methionine(in) + ADP + phosphate + H(+). Functionally, part of the ABC transporter complex MetNIQ involved in methionine import. Responsible for energy coupling to the transport system. The protein is Methionine import ATP-binding protein MetN 2 of Oenococcus oeni (strain ATCC BAA-331 / PSU-1).